We begin with the raw amino-acid sequence, 1038 residues long: Ribosome quality control complex subunit 2 (1038 aa).

A coiled-coil region spans residues 350-383 (ALRIQNQESQAQKKIDDARAENDRKIQALLDVQE). Disordered regions lie at residues 459–499 (LNTS…MKRK), 708–824 (KTSG…DEPG), and 877–898 (QRKK…KREK). Positions 713–768 (EDNGDDDEEEEEEEEEEEEEEEEEEEEEEEEKEEEEKEEEQQQDEDDSNEVNGLEK) form a coiled coil. Positions 714-761 (DNGDDDEEEEEEEEEEEEEEEEEEEEEEEEKEEEEKEEEQQQDEDDSN) are enriched in acidic residues. Positions 780–794 (SFEHDNLEKDIEKHC) are enriched in basic and acidic residues. Over residues 795–805 (TISSDTDSDSG) the composition is skewed to polar residues. Ser-797 carries the post-translational modification Phosphoserine. The stretch at 830–912 (IENINSNVRG…QALKFTKKEK (83 aa)) forms a coiled coil. Residues 877–894 (QRKKEEIMKREVREDRKN) are compositionally biased toward basic and acidic residues.

This sequence belongs to the NEMF family. Component of the ribosome quality control complex (RQC), composed of the E3 ubiquitin ligase RKR1/LTN1, RQC1 and RQC2, as well as CDC48 and its ubiquitin-binding cofactors associated with the 60S ribosomal subunit. RQC2 binds to the 40S-binding surface of tRNAs.

The protein localises to the cytoplasm. Functionally, key component of the ribosome quality control complex (RQC), a ribosome-associated complex that mediates the extraction of incompletely synthesized nascent chains from stalled ribosomes as well as their ubiquitin-mediated proteasomal degradation. Thereby, frees 60S subunit ribosomes from the stalled translation complex and prevents the accumulation of nascent polypeptide chains that are potentially toxic for the cell. Within the RQC complex, RQC2 specifically binds stalled 60S ribosomal subunits by recognizing an exposed, nascent chain-conjugated tRNA moiety and promotes the recruitment of RKR1/LTN1 to stalled 60S subunits. Following binding to stalled 60S ribosomal subunits, RQC2 mediates CAT tailing by recruiting alanine- and threonine-charged tRNA to the A-site and directing the elongation of stalled nascent chains independently of mRNA or 40S subunits, leading to non-templated C-terminal Ala and Thr extensions (CAT tails). CAT tails promote the RKR1/LTN1-mediated ubiquitination of incompletely synthesized nascent polypeptides: CAT tailing facilitates RKR1/LTN1-dependent ubiquitination by exposing lysine residues that would otherwise remain buried in the ribosomal exit tunnel. Following ubiquitination, incompletely synthesized nascent polypeptides are recognized by CDC48 and degraded by the proteasome. CAT-tailed proteins tend to aggregate and sequester chaperones and can induce proteotoxic stress; their RKR1/LTN1-dependent ubiquitination and degradation is required to prevent proteotoxic stress. In Saccharomyces cerevisiae (strain ATCC 204508 / S288c) (Baker's yeast), this protein is Ribosome quality control complex subunit 2.